A 297-amino-acid polypeptide reads, in one-letter code: Probable endonuclease 4 (297 aa).

The Zn(2+) site is built by His-69, His-110, Glu-145, Asp-179, His-182, His-214, Asp-227, His-229, and Glu-259.

Belongs to the AP endonuclease 2 family. Zn(2+) is required as a cofactor.

It carries out the reaction Endonucleolytic cleavage to 5'-phosphooligonucleotide end-products.. Its function is as follows. Endonuclease IV plays a role in DNA repair. It cleaves phosphodiester bonds at apurinic or apyrimidinic (AP) sites, generating a 3'-hydroxyl group and a 5'-terminal sugar phosphate. The protein is Probable endonuclease 4 of Bacillus subtilis (strain 168).